The sequence spans 373 residues: Secondary metabolism regulator laeA (373 aa).

2 disordered regions span residues 1-21 (MFLNGQGGQRPPTVASPPLNV) and 53-81 (AAERDPAAGRWHANGSPSINSTSSKNPDR). A compositionally biased stretch (polar residues) spans 67–77 (GSPSINSTSSK).

Belongs to the methyltransferase superfamily. LaeA methyltransferase family. Component of the heterotrimeric velvet complex composed of laeA, veA and velB; VeA acting as a bridging protein between laeA and velB.

It is found in the nucleus. The catalysed reaction is L-methionyl-[protein] + S-adenosyl-L-methionine = S-methyl-L-methionyl-[protein] + S-adenosyl-L-homocysteine. In terms of biological role, methyltransferase that performs automethylation. No other methyl-accepting substrate has been identified yet. Component of the velvet transcription factor complex that acts as a global regulator for secondary metabolite gene expression. Controls the expression of the cyclopiazonic acid (CPA) gene clusters. Regulates also pigmentation and conidial head morphology. The polypeptide is Secondary metabolism regulator laeA (Aspergillus fumisynnematus).